The following is a 350-amino-acid chain: Uroporphyrinogen decarboxylase (350 aa).

Residues 27 to 31, F46, D76, Y152, S207, and H321 each bind substrate; that span reads RQAGR.

It belongs to the uroporphyrinogen decarboxylase family. As to quaternary structure, homodimer.

The protein resides in the cytoplasm. It carries out the reaction uroporphyrinogen III + 4 H(+) = coproporphyrinogen III + 4 CO2. Its pathway is porphyrin-containing compound metabolism; protoporphyrin-IX biosynthesis; coproporphyrinogen-III from 5-aminolevulinate: step 4/4. Catalyzes the decarboxylation of four acetate groups of uroporphyrinogen-III to yield coproporphyrinogen-III. The sequence is that of Uroporphyrinogen decarboxylase from Listeria welshimeri serovar 6b (strain ATCC 35897 / DSM 20650 / CCUG 15529 / CIP 8149 / NCTC 11857 / SLCC 5334 / V8).